A 453-amino-acid chain; its full sequence is Na(+)/H(+) antiporter NhaA (453 aa).

Transmembrane regions (helical) follow at residues 22 to 42 (ASLL…SPWA), 72 to 92 (MLAF…GLEI), 108 to 128 (LLPI…YMLV), 137 to 157 (GAAI…GLLG), 166 to 186 (IFLT…IALF), 189 to 209 (GHIA…LYVG), 218 to 238 (LFFY…GIHP), 316 to 336 (PLVN…VTFG), 343 to 363 (LVNV…LGIF), 386 to 406 (LFGV…IANL), and 424 to 444 (LGVF…LKWV).

This sequence belongs to the NhaA Na(+)/H(+) (TC 2.A.33) antiporter family.

It is found in the cell inner membrane. It carries out the reaction Na(+)(in) + 2 H(+)(out) = Na(+)(out) + 2 H(+)(in). Its function is as follows. Na(+)/H(+) antiporter that extrudes sodium in exchange for external protons. The chain is Na(+)/H(+) antiporter NhaA from Parabacteroides distasonis (strain ATCC 8503 / DSM 20701 / CIP 104284 / JCM 5825 / NCTC 11152).